Consider the following 155-residue polypeptide: Small ribosomal subunit protein mS86 (155 aa).

A mitochondrion-targeting transit peptide spans Met-1–Leu-27. Residues Ser-36–Ser-114 enclose the RRM domain.

It belongs to the GR-RBP family. Component of the mitochondrial ribosome small subunit.

The protein resides in the mitochondrion. Possibly has a role in RNA transcription or processing during stress. In Arabidopsis thaliana (Mouse-ear cress), this protein is Small ribosomal subunit protein mS86 (RBG6).